Reading from the N-terminus, the 358-residue chain is Neutral protease 2 homolog MEP8 (358 aa).

The signal sequence occupies residues 1 to 19 (MKLSSILLALAALVSPAFS). Residues 20-179 (YAISHLPRSE…EKAIKPVDKR (160 aa)) constitute a propeptide that is removed on maturation. 2 disulfides stabilise this stretch: Cys-186–Cys-256 and Cys-263–Cys-281. His-305 is a Zn(2+) binding site. Glu-306 is an active-site residue. Positions 309 and 320 each coordinate Zn(2+).

Belongs to the peptidase M35 family. Zn(2+) serves as cofactor.

The protein resides in the secreted. The catalysed reaction is Preferential cleavage of bonds with hydrophobic residues in P1'. Also 3-Asn-|-Gln-4 and 8-Gly-|-Ser-9 bonds in insulin B chain.. Functionally, secreted metalloproteinase that allows assimilation of proteinaceous substrates. Shows high activities on basic nuclear substrates such as histone and protamine. May be involved in virulence. The protein is Neutral protease 2 homolog MEP8 (MEP8) of Coccidioides posadasii (strain C735) (Valley fever fungus).